The sequence spans 40 residues: U12-ctenitoxin-Co1a (40 aa).

Intrachain disulfides connect Cys2-Cys16, Cys9-Cys22, Cys15-Cys31, and Cys24-Cys29.

Expressed by the venom gland.

Its subcellular location is the secreted. Insecticidal neurotoxin that reversibly inhibits the N-methyl-D-aspartate (NMDA)-subtype of ionotropic glutamate receptor (GRIN) and inhibits inactivation of insect sodium channels (Nav). In vivo, is highly toxic to insects. This is U12-ctenitoxin-Co1a from Ctenus ornatus (Brazilian spider).